The chain runs to 123 residues: MIQERTILNVADNSGARYAMCIKVLGGSGRRYANIGDVIKVAIKEAVPRAKVKKGDVLKAVVVRTKKGVRRLDGSIIRFDNNACVLLNDTNAQPIGTRIFGPVTRELRNEKFMKIISLAPEVL.

The protein belongs to the universal ribosomal protein uL14 family. In terms of assembly, part of the 50S ribosomal subunit. Forms a cluster with proteins L3 and L19. In the 70S ribosome, L14 and L19 interact and together make contacts with the 16S rRNA in bridges B5 and B8.

Functionally, binds to 23S rRNA. Forms part of two intersubunit bridges in the 70S ribosome. This Blochmanniella pennsylvanica (strain BPEN) protein is Large ribosomal subunit protein uL14.